We begin with the raw amino-acid sequence, 250 residues long: Ubiquinone/menaquinone biosynthesis C-methyltransferase UbiE (250 aa).

Residues Thr-73, Asp-94, 122–123 (NA), and Ser-139 contribute to the S-adenosyl-L-methionine site.

The protein belongs to the class I-like SAM-binding methyltransferase superfamily. MenG/UbiE family.

The catalysed reaction is a 2-demethylmenaquinol + S-adenosyl-L-methionine = a menaquinol + S-adenosyl-L-homocysteine + H(+). It catalyses the reaction a 2-methoxy-6-(all-trans-polyprenyl)benzene-1,4-diol + S-adenosyl-L-methionine = a 5-methoxy-2-methyl-3-(all-trans-polyprenyl)benzene-1,4-diol + S-adenosyl-L-homocysteine + H(+). Its pathway is quinol/quinone metabolism; menaquinone biosynthesis; menaquinol from 1,4-dihydroxy-2-naphthoate: step 2/2. It functions in the pathway cofactor biosynthesis; ubiquinone biosynthesis. In terms of biological role, methyltransferase required for the conversion of demethylmenaquinol (DMKH2) to menaquinol (MKH2) and the conversion of 2-polyprenyl-6-methoxy-1,4-benzoquinol (DDMQH2) to 2-polyprenyl-3-methyl-6-methoxy-1,4-benzoquinol (DMQH2). This chain is Ubiquinone/menaquinone biosynthesis C-methyltransferase UbiE, found in Francisella tularensis subsp. novicida (strain U112).